A 43-amino-acid polypeptide reads, in one-letter code: SPbeta prophage-derived uncharacterized protein YopG (43 aa).

The chain is SPbeta prophage-derived uncharacterized protein YopG (yopG) from Bacillus subtilis (strain 168).